A 538-amino-acid polypeptide reads, in one-letter code: Poly [ADP-ribose] polymerase 2 (538 aa).

The region spanning 1 to 94 (MSIINDENGR…RDDEPVPNKY (94 aa)) is the WGR domain. The disordered stretch occupies residues 104 to 133 (RQTEKEVKKEEPEPEPKVDEKNTRGRKKRG). The span at 105 to 126 (QTEKEVKKEEPEPEPKVDEKNT) shows a compositional bias: basic and acidic residues. One can recognise a PARP alpha-helical domain in the interval 148-285 (VEEVNEKLKE…GSIEASLELK (138 aa)). Positions 309–535 (EPVSEEIAGK…VKVDRLTAKE (227 aa)) constitute a PARP catalytic domain. A disordered region spans residues 357–381 (QEVPKKRGRKSTKTAAPTVPPPTTK).

It belongs to the ARTD/PARP family.

It localises to the nucleus. The catalysed reaction is NAD(+) + (ADP-D-ribosyl)n-acceptor = nicotinamide + (ADP-D-ribosyl)n+1-acceptor + H(+).. It carries out the reaction L-aspartyl-[protein] + NAD(+) = 4-O-(ADP-D-ribosyl)-L-aspartyl-[protein] + nicotinamide. The enzyme catalyses L-glutamyl-[protein] + NAD(+) = 5-O-(ADP-D-ribosyl)-L-glutamyl-[protein] + nicotinamide. Inhibited by N-(6-oxo-5,6-dihydrophenanthridin-2-yl)-N,N-dimethylacetamide HCl (PJ34), 1,5-dihydroxyisoquinoline (DHQ) and 3-aminobenzamide (3AB). In terms of biological role, poly[ADP-ribose] polymerase modifies various nuclear proteins by poly(ADP-ribosyl)ation, a post-translational modification synthesized after DNA damage that appears as an obligatory step in a detection/signaling pathway leading to the reparation of DNA strand breaks and programmed cell death. This chain is Poly [ADP-ribose] polymerase 2, found in Caenorhabditis elegans.